A 568-amino-acid polypeptide reads, in one-letter code: Hexose transporter 1 (568 aa).

At 1-32 (MATEEMREKSLKREAESLWDIPPESYASKACS) the chain is on the cytoplasmic side. Residues 33–53 (CMGTAAQLVMVAVLGSFQFGF) traverse the membrane as a helical segment. The Extracellular segment spans residues 54–86 (NLSALNTSKAFIILDFGWCKDENGGHYSDCDTG). Cys72 and Cys83 are disulfide-bonded. Residues 87–107 (LVYGSLINTAVFLGACVGCLL) form a helical membrane-spanning segment. Residues 108-119 (GGRLTDFGRRAS) lie on the Cytoplasmic side of the membrane. Residues 120–140 (LIFTHCVCTLGCILSAAAEGF) traverse the membrane as a helical segment. Topologically, residues 141–142 (PT) are extracellular. The chain crosses the membrane as a helical span at residues 143–163 (LLIARLVVGVAVGMFTVCVPM). The Cytoplasmic segment spans residues 164-182 (YLSEVTPDDRRGYFGTFHQ). Gln182 serves as a coordination point for alpha-D-glucose. Residue Gln182 coordinates beta-D-glucose. Residues 183–203 (LFITLGIFFGTLLGLAFGNAP) form a helical membrane-spanning segment. Residues 204 to 220 (AGDEVYEVSTFQQAWWR) lie on the Extracellular side of the membrane. Residues 221 to 241 (VMLGLPAVVSLLAIWLLWFVF) traverse the membrane as a helical segment. The Cytoplasmic segment spans residues 242–306 (PFETPQYMVE…KAIVHPTYRS (65 aa)). A helical membrane pass occupies residues 307–327 (VILLACLLSIMQQFTGINVLV). Positions 318, 319, and 324 each coordinate alpha-D-glucose. Gln318 provides a ligand contact to beta-D-glucose. Asn324 contributes to the beta-D-glucose binding site. Topologically, residues 328 to 345 (ANSNNLYSSLKLPQDAVT) are extracellular. Residues 346–366 (GLTVGFTALNVFLTVITIPLV) traverse the membrane as a helical segment. Residue Asn355 participates in beta-D-glucose binding. The Cytoplasmic portion of the chain corresponds to 367–374 (DRLGRRTL). The helical transmembrane segment at 375 to 395 (LLFSEAVMFVAMGIAFVANLV) threads the bilayer. Residues 396–406 (DQSNTAVQWVT) lie on the Extracellular side of the membrane. The chain crosses the membrane as a helical span at residues 407-427 (VACVYVFIVGFAVGYGPVLWI). An alpha-D-glucose-binding site is contributed by Trp426. The Cytoplasmic segment spans residues 428–443 (YIHEIFPPEIKQGAAS). A helical transmembrane segment spans residues 444–464 (LASALNWVATVAIVLPSDFLL). Topologically, residues 465–469 (KQGFS) are extracellular. The helical transmembrane segment at 470–490 (VFVGICTVALAIIFVVTFIFV) threads the bilayer. The Cytoplasmic segment spans residues 491 to 568 (KETKGLSIEE…DDLTKGTEVV (78 aa)).

The protein belongs to the major facilitator superfamily. Sugar transporter (TC 2.A.1.1) family. Homodimer.

It localises to the cell membrane. The catalysed reaction is D-glucose(out) = D-glucose(in). It catalyses the reaction D-fructose(out) = D-fructose(in). It carries out the reaction D-galactose(in) = D-galactose(out). The enzyme catalyses D-mannose(out) = D-mannose(in). The catalysed reaction is D-glucosamine(out) = D-glucosamine(in). It catalyses the reaction D-xylose(out) = D-xylose(in). Inhibited by cytochalasin B. Its function is as follows. Sodium-independent facilitative hexose transporter. Can transport D-glucose and D-mannose with high affinity, and D-fructose and D-galactose with low affinity. Can transport D-xylose and D-glucosamine. The polypeptide is Hexose transporter 1 (Toxoplasma gondii).